Reading from the N-terminus, the 367-residue chain is tRNA(Ile)-lysidine synthase, chloroplastic (367 aa).

Ser-64 to Ser-69 is an ATP binding site.

It belongs to the tRNA(Ile)-lysidine synthase family.

It localises to the plastid. The protein resides in the chloroplast. The catalysed reaction is cytidine(34) in tRNA(Ile2) + L-lysine + ATP = lysidine(34) in tRNA(Ile2) + AMP + diphosphate + H(+). Its function is as follows. Ligates lysine onto the cytidine present at position 34 of the AUA codon-specific tRNA(Ile) that contains the anticodon CAU, in an ATP-dependent manner. Cytidine is converted to lysidine, thus changing the amino acid specificity of the tRNA from methionine to isoleucine. In Nephroselmis olivacea (Green alga), this protein is tRNA(Ile)-lysidine synthase, chloroplastic.